We begin with the raw amino-acid sequence, 1162 residues long: Leptin receptor (1162 aa).

The N-terminal stretch at M1 to A21 is a signal peptide. At L22–G839 the chain is on the extracellular side. 5 cysteine pairs are disulfide-bonded: C37–C90, C89–C99, C131–C142, C186–C195, and C188–C193. Residues N55, N56, N73, and N98 are each glycosylated (N-linked (GlcNAc...) asparagine). N187 carries N-linked (GlcNAc...) asparagine glycosylation. In terms of domain architecture, Fibronectin type-III 1 spans P238 to V331. 3 N-linked (GlcNAc...) asparagine glycosylation sites follow: N275, N345, and N356. 2 disulfide bridges follow: C350–C410 and C411–C416. Residue N431 is glycosylated (N-linked (GlcNAc...) asparagine). 3 disulfide bridges follow: C434–C445, C471–C526, and C486–C496. Residues H465 to E482 are leptin-binding. N-linked (GlcNAc...) asparagine glycosylation is found at N514, N622, N657, N668, N686, N695, N698, and N726. 3 Fibronectin type-III domains span residues P537–M632, P637–F729, and A738–I831. Positions W620–S624 match the WSXWS motif motif. A helical transmembrane segment spans residues L840–I860. At S861–V1162 the chain is on the cytoplasmic side. The short motif at F869–K877 is the Box 1 motif element. S880 carries the phosphoserine modification. The tract at residues E891–L896 is required for JAK2 activation. The tract at residues L896–V904 is required for STAT3 phosphorylation. Y985 is modified (phosphotyrosine; by JAK2). The residue at position 1077 (Y1077) is a Phosphotyrosine. Y1138 is subject to Phosphotyrosine; by JAK2.

The protein belongs to the type I cytokine receptor family. Type 2 subfamily. As to quaternary structure, present as a mixture of monomers and dimers. The phosphorylated receptor binds a number of SH2 domain-containing proteins such as JAK2, STAT3, PTPN11, and SOCS3. Interaction with SOCS3 inhibits JAK/STAT signaling and MAPK cascade. Post-translationally, on ligand binding, phosphorylated on two conserved C-terminal tyrosine residues (isoform B only) by JAK2. Tyr-985 is required for complete binding and activation of PTPN11, ERK/FOS activation,for interaction with SOCS3 and SOCS3 mediated inhibition of leptin signaling. Phosphorylation on Tyr-1138 is required for STAT3 binding/activation. Phosphorylation of Tyr-1077 has a more accessory role. As to expression, isoform B is expressed in kidney, liver, lung, ovary, spleen and uterus. Increased level in uterus during gestation. Isoform A and isoform C are predominantly expressed in cerebral microvessels and choroid plexus, with lower levels in cortex, cerebellum and hypothalamus but also liver and lung. Isoform F is expressed at high levels in brain, liver and spleen and less in stomach, kidney, thymus, heart, lung and hypothalamus.

The protein resides in the cell membrane. It is found in the basolateral cell membrane. Its subcellular location is the secreted. Receptor for hormone LEP/leptin. On ligand binding, mediates LEP central and peripheral effects through the activation of different signaling pathways such as JAK2/STAT3 and MAPK cascade/FOS. In the hypothalamus, LEP acts as an appetite-regulating factor that induces a decrease in food intake and an increase in energy consumption by inducing anorexinogenic factors and suppressing orexigenic neuropeptides, also regulates bone mass and secretion of hypothalamo-pituitary-adrenal hormones. In the periphery, increases basal metabolism, influences reproductive function, regulates pancreatic beta-cell function and insulin secretion, is pro-angiogenic and affects innate and adaptive immunity. Control of energy homeostasis and melanocortin production (stimulation of POMC and full repression of AgRP transcription) is mediated by STAT3 signaling, whereas distinct signals regulate NPY and the control of fertility, growth and glucose homeostasis. Involved in the regulation of counter-regulatory response to hypoglycemia by inhibiting neurons of the parabrachial nucleus. Has a specific effect on T lymphocyte responses, differentially regulating the proliferation of naive and memory T-cells. Leptin increases Th1 and suppresses Th2 cytokine production. Functionally, may transport LEP across the blood-brain barrier. Binds LEP and mediates LEP endocytosis. Does not induce phosphorylation of and activate STAT3. In terms of biological role, antagonizes Isoform A and isoform B-mediated LEP binding and endocytosis. In Rattus norvegicus (Rat), this protein is Leptin receptor (Lepr).